The following is an 83-amino-acid chain: Short neurotoxin 1 (83 aa).

The signal sequence occupies residues 1–21 (MKTLLLTLVVVTIVCLDLGYT). 4 disulfide bridges follow: Cys24-Cys45, Cys38-Cys62, Cys64-Cys75, and Cys76-Cys81.

The protein belongs to the three-finger toxin family. Short-chain subfamily. Type I alpha-neurotoxin sub-subfamily. In terms of tissue distribution, expressed by the venom gland.

Its subcellular location is the secreted. Binds to muscle nicotinic acetylcholine receptor (nAChR) and inhibit acetylcholine from binding to the receptor, thereby impairing neuromuscular transmission. The protein is Short neurotoxin 1 of Oxyuranus scutellatus scutellatus (Australian taipan).